The chain runs to 391 residues: Polyketide synthase 1 (391 aa).

Cysteine 164 is an active-site residue.

This sequence belongs to the thiolase-like superfamily. Chalcone/stilbene synthases family. Homodimer. As to expression, expressed in fruits.

The enzyme catalyses (E)-4-coumaroyl-CoA + 3 malonyl-CoA + 3 H(+) = 2',4,4',6'-tetrahydroxychalcone + 3 CO2 + 4 CoA. The protein operates within secondary metabolite biosynthesis; flavonoid biosynthesis. Polyketide synthase producing naringenin chalcone and slightly p-coumaryltriacetic acid lactone (CTAL). Can use p-coumaryl-CoA as substrate. The chain is Polyketide synthase 1 (PKS1) from Rubus idaeus (Raspberry).